A 93-amino-acid polypeptide reads, in one-letter code: Large ribosomal subunit protein bL31B (93 aa).

Belongs to the bacterial ribosomal protein bL31 family. Type B subfamily. As to quaternary structure, part of the 50S ribosomal subunit.

The protein is Large ribosomal subunit protein bL31B of Pseudomonas syringae pv. tomato (strain ATCC BAA-871 / DC3000).